We begin with the raw amino-acid sequence, 117 residues long: Large ribosomal subunit protein bL20c (117 aa).

Belongs to the bacterial ribosomal protein bL20 family.

Its subcellular location is the plastid. The protein resides in the chloroplast. Its function is as follows. Binds directly to 23S ribosomal RNA and is necessary for the in vitro assembly process of the 50S ribosomal subunit. It is not involved in the protein synthesizing functions of that subunit. The sequence is that of Large ribosomal subunit protein bL20c from Platanus occidentalis (Sycamore).